The following is a 199-amino-acid chain: Adenylyl-sulfate kinase (199 aa).

The segment at 1–21 (MSQSSNITWHDSEVTKSDRQQ) is disordered. Over residues 10–19 (HDSEVTKSDR) the composition is skewed to basic and acidic residues. 34–41 (GLSGSGKS) is an ATP binding site. S108 serves as the catalytic Phosphoserine intermediate.

It belongs to the APS kinase family.

The enzyme catalyses adenosine 5'-phosphosulfate + ATP = 3'-phosphoadenylyl sulfate + ADP + H(+). It participates in sulfur metabolism; hydrogen sulfide biosynthesis; sulfite from sulfate: step 2/3. Its function is as follows. Catalyzes the synthesis of activated sulfate. This chain is Adenylyl-sulfate kinase, found in Staphylococcus haemolyticus (strain JCSC1435).